Reading from the N-terminus, the 372-residue chain is M protein, serotype 2.2 (372 aa).

The N-terminal stretch at M1–A41 is a signal peptide. C repeat units follow at residues A124–H158, K166–Y200, and Q215–L249. 3 stretches are compositionally biased toward basic and acidic residues: residues K125–T169, T226–T246, and E260–Q274. 2 disordered regions span residues K125–A191 and E211–Q274. D repeat units lie at residues A275–Q280, G281–E286, A289–E294, and A296–E301. The span at L295–A304 shows a compositional bias: basic and acidic residues. The disordered stretch occupies residues L295–E344. Over residues A322–S341 the composition is skewed to polar residues. The LPXTG sorting signal signature appears at L339–G343. At T342 the chain carries Pentaglycyl murein peptidoglycan amidated threonine. A propeptide spans G343–N372 (removed by sortase).

Belongs to the M protein family.

It is found in the secreted. Its subcellular location is the cell wall. Functionally, this protein is one of the different antigenic serotypes of protein M. Protein M is closely associated with virulence of the bacterium and can render the organism resistant to phagocytosis. The chain is M protein, serotype 2.2 (emmL2.2) from Streptococcus pyogenes.